Consider the following 356-residue polypeptide: tRNA-specific 2-thiouridylase MnmA 1 (356 aa).

Residues 8–15 (GMSGGVDS) and methionine 34 each bind ATP. Cysteine 103 serves as the catalytic Nucleophile. Cysteines 103 and 199 form a disulfide. ATP is bound at residue glycine 127. The segment at 149 to 151 (KDQ) is interaction with tRNA. Cysteine 199 functions as the Cysteine persulfide intermediate in the catalytic mechanism. Residues 305–306 (RY) form an interaction with tRNA region.

The protein belongs to the MnmA/TRMU family.

Its subcellular location is the cytoplasm. The catalysed reaction is S-sulfanyl-L-cysteinyl-[protein] + uridine(34) in tRNA + AH2 + ATP = 2-thiouridine(34) in tRNA + L-cysteinyl-[protein] + A + AMP + diphosphate + H(+). Functionally, catalyzes the 2-thiolation of uridine at the wobble position (U34) of tRNA, leading to the formation of s(2)U34. The chain is tRNA-specific 2-thiouridylase MnmA 1 from Clostridium botulinum (strain Loch Maree / Type A3).